We begin with the raw amino-acid sequence, 121 residues long: Large ribosomal subunit protein uL18 (121 aa).

The protein belongs to the universal ribosomal protein uL18 family. Part of the 50S ribosomal subunit; part of the 5S rRNA/L5/L18/L25 subcomplex. Contacts the 5S and 23S rRNAs.

This is one of the proteins that bind and probably mediate the attachment of the 5S RNA into the large ribosomal subunit, where it forms part of the central protuberance. The sequence is that of Large ribosomal subunit protein uL18 from Ehrlichia canis (strain Jake).